Consider the following 331-residue polypeptide: Adenosine deaminase (331 aa).

Residues H12 and H14 each contribute to the Zn(2+) site. Residues H14, D16, and G170 each contribute to the substrate site. H197 lines the Zn(2+) pocket. E200 acts as the Proton donor in catalysis. D278 is a Zn(2+) binding site. D279 is a substrate binding site.

This sequence belongs to the metallo-dependent hydrolases superfamily. Adenosine and AMP deaminases family. Adenosine deaminase subfamily. The cofactor is Zn(2+).

The catalysed reaction is adenosine + H2O + H(+) = inosine + NH4(+). It catalyses the reaction 2'-deoxyadenosine + H2O + H(+) = 2'-deoxyinosine + NH4(+). Functionally, catalyzes the hydrolytic deamination of adenosine and 2-deoxyadenosine. The protein is Adenosine deaminase of Shewanella sp. (strain MR-4).